Reading from the N-terminus, the 385-residue chain is Lipid-A-disaccharide synthase 2 (385 aa).

It belongs to the LpxB family.

It carries out the reaction a lipid X + a UDP-2-N,3-O-bis[(3R)-3-hydroxyacyl]-alpha-D-glucosamine = a lipid A disaccharide + UDP + H(+). The protein operates within bacterial outer membrane biogenesis; LPS lipid A biosynthesis. Its function is as follows. Condensation of UDP-2,3-diacylglucosamine and 2,3-diacylglucosamine-1-phosphate to form lipid A disaccharide, a precursor of lipid A, a phosphorylated glycolipid that anchors the lipopolysaccharide to the outer membrane of the cell. This chain is Lipid-A-disaccharide synthase 2, found in Legionella pneumophila (strain Lens).